Consider the following 515-residue polypeptide: Spermatogenesis-associated protein 2 (515 aa).

Residues A78–S150 form the PUB domain. The PIM motif signature appears at T321–R338. The interval G429–T452 is disordered.

This sequence belongs to the SPATA2 family. Interacts (via the PIM motif) with RNF31/HOIP (via the PUB domain); the interaction is direct. Interacts (via the PUB domain) with CYLD; the interaction is direct. As to expression, widely expressed, with highest expression in testis, lung and intestine, and lower expression in brain, heart and spleen. Present at high level in Sertoli cells: expressed from stage I to stage XII of the testis seminiferous epithelium (at protein level).

The protein resides in the cytoplasm. The protein localises to the nucleus. Bridging factor that mediates the recruitment of CYLD to the LUBAC complex, thereby regulating TNF-alpha-induced necroptosis. Acts as a direct binding intermediate that bridges RNF31/HOIP, the catalytic subunit of the LUBAC complex, and the deubiquitinase (CYLD), thereby recruiting CYLD to the TNF-R1 signaling complex (TNF-RSC). Required to activate the 'Met-1'- (linear) and 'Lys-63'-linked deubiquitinase activities of CYLD. Controls the kinase activity of RIPK1 and TNF-alpha-induced necroptosis by promoting 'Met-1'-linked deubiquitination of RIPK1 by CYLD. The polypeptide is Spermatogenesis-associated protein 2 (Mus musculus (Mouse)).